The primary structure comprises 551 residues: MFS-type transporter ATEG_00331 (551 aa).

The signal sequence occupies residues 1-18 (MKAWLLVSSLCLSTFIAA). 4 consecutive transmembrane segments (helical) span residues 40-60 (LEFTWIGTAYLLPAAASTPPW), 71-91 (PVLMISIVVFFIGSLIGALAI), 102-122 (IQGTGGGGILGLSATVIGDVF), and 132-152 (GVLGVTWGVACGLGPIVGGAF). Asn-165 and Asn-178 each carry an N-linked (GlcNAc...) asparagine glycan. The next 8 helical transmembrane spans lie at 179–199 (LTTSVPVAGVAGALVLLFLEV), 206–228 (IIEGLLAMDWLGTITIVGATVMF), 233–255 (GYGGIAYPWNSATVVCLIVFGIG), 324–344 (VYLLPVAVTLCVASTATGLYI), 354–374 (IYFGLVMMILGHGLYINLQPY), 380–400 (IIIFQIIAGLGLGPLFQAPII), 417–437 (TVFFARDIATAMSIVFGGVIF), and 493–513 (SEWIFYTALSGAALLLSVFIS). Asn-524 carries an N-linked (GlcNAc...) asparagine glycan.

It belongs to the major facilitator superfamily. TCR/Tet family.

It localises to the membrane. Its function is as follows. MFS-type transporter; part of the gene cluster that mediates the biosynthesis of isoflavipucine. In Aspergillus terreus (strain NIH 2624 / FGSC A1156), this protein is MFS-type transporter ATEG_00331.